A 407-amino-acid chain; its full sequence is E3 ubiquitin-protein ligase IE2 (407 aa).

Polar residues predominate over residues 1–10 (MSRQINAATP). Positions 1–69 (MSRQINAATP…RVSEENVQII (69 aa)) are disordered. Basic residues predominate over residues 13–25 (SRHHRLSLSRRRI). A compositionally biased stretch (low complexity) spans 31–47 (SEAQPSSSSRSQTSSSS). A coiled-coil region spans residues 127-158 (QQYQNNIASETAAQRALQRALDLEAQLMNEIA). Residues 179–200 (QSPDLFASPQSSEQQQQSEPEE) form a disordered region. The span at 186–196 (SPQSSEQQQQS) shows a compositional bias: low complexity. Residues 206–254 (CNICFTTFKDTKNVNSSFVTTTHCNHAVCFKCYVKIIMANSVYKCFCSA) form an RING-type; degenerate zinc finger. Residues 336–393 (LKHKHAVAELDLQKANYDLQESTKKSEELQSTVNNLQEQLNKQVVESQAKFLEFERNN) are a coiled coil.

Belongs to the alphabaculovirus IE2 protein family. Homooligomer. In terms of processing, auto-ubiquitinated.

It localises to the host nucleus. It carries out the reaction S-ubiquitinyl-[E2 ubiquitin-conjugating enzyme]-L-cysteine + [acceptor protein]-L-lysine = [E2 ubiquitin-conjugating enzyme]-L-cysteine + N(6)-ubiquitinyl-[acceptor protein]-L-lysine.. Its function is as follows. RING-finger E3 ubiquitin ligase that plays an important regulatory role during the initial stages of infection. Migrates to specific nuclear foci early in infection supposely to prepare the sites for viral replication by targeting and ubiquitinating host proteins. The polypeptide is E3 ubiquitin-protein ligase IE2 (IE2) (Rachiplusia ou multiple nucleopolyhedrovirus (strain R1) (RoMNPV)).